The following is a 175-amino-acid chain: uncharacterized protein (175 aa).

A signal peptide spans 1–22 (MNRIVGILISILMLACIGVTMA).

This is an uncharacterized protein from Archaeoglobus fulgidus (strain ATCC 49558 / DSM 4304 / JCM 9628 / NBRC 100126 / VC-16).